A 446-amino-acid polypeptide reads, in one-letter code: 5-methylthioadenosine/S-adenosylhomocysteine deaminase (446 aa).

Residues histidine 72 and histidine 74 each coordinate Zn(2+). Substrate contacts are provided by glutamate 101 and histidine 194. Histidine 221 serves as a coordination point for Zn(2+). Substrate-binding residues include glutamate 224 and aspartate 309. Aspartate 309 provides a ligand contact to Zn(2+).

This sequence belongs to the metallo-dependent hydrolases superfamily. MTA/SAH deaminase family. Requires Zn(2+) as cofactor.

The catalysed reaction is S-adenosyl-L-homocysteine + H2O + H(+) = S-inosyl-L-homocysteine + NH4(+). The enzyme catalyses S-methyl-5'-thioadenosine + H2O + H(+) = S-methyl-5'-thioinosine + NH4(+). Functionally, catalyzes the deamination of 5-methylthioadenosine and S-adenosyl-L-homocysteine into 5-methylthioinosine and S-inosyl-L-homocysteine, respectively. Is also able to deaminate adenosine. This chain is 5-methylthioadenosine/S-adenosylhomocysteine deaminase, found in Saccharophagus degradans (strain 2-40 / ATCC 43961 / DSM 17024).